The primary structure comprises 215 residues: Ribonuclease T (215 aa).

In terms of domain architecture, Exonuclease spans 20–194 (VVIDVETAGF…YDTERTAVLF (175 aa)). Mg(2+) contacts are provided by aspartate 23, glutamate 25, histidine 181, and aspartate 186. The active-site Proton donor/acceptor is histidine 181.

The protein belongs to the RNase T family. In terms of assembly, homodimer. It depends on Mg(2+) as a cofactor.

Its function is as follows. Trims short 3' overhangs of a variety of RNA species, leaving a one or two nucleotide 3' overhang. Responsible for the end-turnover of tRNA: specifically removes the terminal AMP residue from uncharged tRNA (tRNA-C-C-A). Also appears to be involved in tRNA biosynthesis. This is Ribonuclease T from Salmonella paratyphi A (strain ATCC 9150 / SARB42).